The following is a 337-amino-acid chain: Delta-aminolevulinic acid dehydratase (337 aa).

Lys205 functions as the Schiff-base intermediate with substrate in the catalytic mechanism. 5-aminolevulinate-binding residues include Arg215 and Lys229. A Mg(2+)-binding site is contributed by Glu245. Catalysis depends on Lys260, which acts as the Schiff-base intermediate with substrate. 2 residues coordinate 5-aminolevulinate: Ser286 and Tyr324.

The protein belongs to the ALAD family. Homooctamer; formed by oligomerization of dimers. Mg(2+) is required as a cofactor.

The catalysed reaction is 2 5-aminolevulinate = porphobilinogen + 2 H2O + H(+). It participates in porphyrin-containing compound metabolism; protoporphyrin-IX biosynthesis; coproporphyrinogen-III from 5-aminolevulinate: step 1/4. Its activity is regulated as follows. Stimulated by magnesium ions. Functionally, catalyzes an early step in the biosynthesis of tetrapyrroles. Binds two molecules of 5-aminolevulinate per subunit, each at a distinct site, and catalyzes their condensation to form porphobilinogen. In Pseudomonas aeruginosa (strain ATCC 15692 / DSM 22644 / CIP 104116 / JCM 14847 / LMG 12228 / 1C / PRS 101 / PAO1), this protein is Delta-aminolevulinic acid dehydratase (hemB).